A 329-amino-acid chain; its full sequence is uncharacterized protein (329 aa).

A run of 2 helical transmembrane segments spans residues isoleucine 13–isoleucine 35 and valine 229–tyrosine 248.

It is found in the cell membrane. This is an uncharacterized protein from Archaeoglobus fulgidus (strain ATCC 49558 / DSM 4304 / JCM 9628 / NBRC 100126 / VC-16).